The following is a 381-amino-acid chain: uncharacterized protein (381 aa).

A run of 11 helical transmembrane segments spans residues 10 to 29 (IFFS…INFY), 75 to 93 (IILI…LIIL), 98 to 117 (LIKI…FTSR), 130 to 147 (YLFL…NLMV), 157 to 179 (TNNT…FLHY), 199 to 221 (IELQ…WYYE), 236 to 255 (LILK…ICYI), 262 to 284 (YFAN…IHGT), 289 to 311 (NILY…ILIL), 323 to 340 (ALLS…AGAL), and 355 to 374 (LFSV…WYFI).

The protein resides in the cell membrane. This is an uncharacterized protein from Rickettsia prowazekii (strain Madrid E).